A 509-amino-acid chain; its full sequence is MGKKPVMLMILDGFGISKIDNGNAVKAAYKPNLDKYFKKYPHTELGASGLSVGLPEGQMGNSEVGHLNIGAGRIVYQALTRITKSINEGQFFKNEVLNSAVDNAVKNNSDLHLLGLVSPGGVHSHTNHLKGLLQLAKQKGASRVYIHAFTDGRDVPPSSAYMYIDDMEKYIQKIGIGKIATVSGRYYAMDRDKRWERVELAYNALVYGRGNKAASASEAVTNSYDNGKTDEFIVPTVIEEDNKPVTTIKNGDSVIFFNFRPDRARQLTRALNDNIFKGFKREKLDLKFVTMTEYDATLENVYVAFNNEVYKNTLGEYVSKMEKSQLRIAETEKYAHVTFFFNGGVEAPNRNEDRELIPSPKVATYDLKPEMSAREVTSTVLDRLDQDKYDMIILNFANPDMVGHTGIFQAAKKAIEVVDECLGRIVSKILEKNGTVFITADHGNSEQMVDYSTGNPMTAHTTNSVPFLYVSKNSTELRKDGILADISPTILQVMGLEKPKEMTGKSLIK.

Mn(2+) is bound by residues aspartate 12 and serine 62. Catalysis depends on serine 62, which acts as the Phosphoserine intermediate. Substrate contacts are provided by residues histidine 123, 153-154 (RD), arginine 185, arginine 191, 260-263 (RPDR), and lysine 333. Mn(2+) contacts are provided by aspartate 400, histidine 404, aspartate 441, histidine 442, and histidine 460.

This sequence belongs to the BPG-independent phosphoglycerate mutase family. Monomer. Requires Mn(2+) as cofactor.

It carries out the reaction (2R)-2-phosphoglycerate = (2R)-3-phosphoglycerate. The protein operates within carbohydrate degradation; glycolysis; pyruvate from D-glyceraldehyde 3-phosphate: step 3/5. Its function is as follows. Catalyzes the interconversion of 2-phosphoglycerate and 3-phosphoglycerate. This is 2,3-bisphosphoglycerate-independent phosphoglycerate mutase from Clostridium kluyveri (strain ATCC 8527 / DSM 555 / NBRC 12016 / NCIMB 10680 / K1).